The following is a 127-amino-acid chain: UPF0102 protein Gura_3756 (127 aa).

This sequence belongs to the UPF0102 family.

This is UPF0102 protein Gura_3756 from Geotalea uraniireducens (strain Rf4) (Geobacter uraniireducens).